Reading from the N-terminus, the 479-residue chain is mRNA export factor ICP27 homolog (479 aa).

Low complexity predominate over residues 1 to 15; sequence MVPSQRLSRTSSISS. 2 disordered regions span residues 1–77 and 91–210; these read MVPS…PSSV and KKWD…NKPW. Over residues 35–44 the composition is skewed to acidic residues; that stretch reads TDCDMDPMEG. Over residues 132–142 the composition is skewed to basic and acidic residues; it reads EVHGCTDESYG. Cys354, His445, Cys449, and Cys454 together coordinate Zn(2+). The CHC2-type zinc finger occupies 354–454; that stretch reads CFLPNTRDYN…HTRDCRSASC (101 aa).

This sequence belongs to the HHV-1 ICP27 protein family. As to quaternary structure, interacts with host XPO1 and with the XPO1 export pathway components small GTPase RAN and nucleoporin NUP214. Interacts with host SPEN, OTT1 and OTT3. Interacts with host SRSF1, SRSF3, SRSF7 and SRPK1. Interacts with host DHX9; this interaction may have an inhibitory effect on virion production. Interacts (via N-terminus) with host NXF1; this interaction plays a role in mRNA export. Post-translationally, phosphorylated by cellular protein kinase CK2.

The protein localises to the host nucleus. It is found in the host cytoplasm. Functionally, promotes the nuclear export of a subset of early and late viral mRNAs by interacting with mRNAs and cellular export proteins. Additionally may prevent the establishment of cellular antiviral state, by acting as an alternative splicing factor for cellular RNAs such as STAT1, resulting in a STAT1 mRNA incapable of producing the STAT1alpha isoform. The polypeptide is mRNA export factor ICP27 homolog (Homo sapiens (Human)).